The primary structure comprises 619 residues: Lysophospholipid acyltransferase (619 aa).

Topologically, residues 1–19 (MYNPVDAVLTKIITNYGID) are lumenal. Residues 20–39 (SFTLRYAICLLGSFPLNAIL) form a helical membrane-spanning segment. The Cytoplasmic segment spans residues 40–51 (KRIPEKRIGLKC). The helical transmembrane segment at 52–72 (CFIISMSMFYLFGVLNLVSGF) threads the bilayer. Residues 73–92 (RTLFISTMFTYLISRFYRSK) lie on the Lumenal side of the membrane. A helical transmembrane segment spans residues 93-113 (FMPHLNFMFVMGHLAINHIHA). At 114-231 (QFLNEQTQTT…GERRQIPKNG (118 aa)) the chain is on the cytoplasmic side. Residue Asp146 is the Nucleophile of the active site. Residues 232–252 (KLALWKVVQGLAWMILSTLGM) form a helical membrane-spanning segment. Over 253-274 (KHFPVKYVLDKDGFPTRSFIFR) the chain is Lumenal. A helical membrane pass occupies residues 275–295 (IHYLFLLGFIHRFKYYAAWTI). At 296 to 429 (SEGSCILCGL…TPLPSKKIYD (134 aa)) the chain is on the cytoplasmic side. Glu297 serves as the catalytic Nucleophile. The active site involves His382. The helical transmembrane segment at 430 to 450 (LVGIYAIKLAFGYMVQPFIIL) threads the bilayer. At 451 to 456 (DLKPSL) the chain is on the lumenal side. Residues 457–477 (MVWGSVYFYVHIIVAFSFFLF) form a helical membrane-spanning segment. At 478–619 (RGPYAKQVTE…SPKPISKKEE (142 aa)) the chain is on the cytoplasmic side. The residue at position 513 (Ser513) is a Phosphoserine. A coiled-coil region spans residues 545–593 (ELEKWDNAKEDWEDFCKDYKEWRNKNGLEIEEENLSKAFERFKQEFSNA). The tract at residues 592 to 619 (NAASGSGERVRKMSFSGYSPKPISKKEE) is disordered. Phosphoserine is present on residues Ser605, Ser610, and Ser615.

It belongs to the membrane-bound acyltransferase family.

It is found in the endoplasmic reticulum membrane. The catalysed reaction is a 1-acyl-sn-glycero-3-phosphate + an acyl-CoA = a 1,2-diacyl-sn-glycero-3-phosphate + CoA. It catalyses the reaction a 1-acyl-sn-glycero-3-phosphocholine + an acyl-CoA = a 1,2-diacyl-sn-glycero-3-phosphocholine + CoA. It carries out the reaction 1-acyl-sn-glycero-3-phospho-(1'-sn-glycerol) + an acyl-CoA = a 1,2-diacyl-sn-glycero-3-phospho-(1'-sn-glycerol) + CoA. The enzyme catalyses a 1-acyl-sn-glycero-3-phospho-(1D-myo-inositol) + an acyl-CoA = a 1,2-diacyl-sn-glycero-3-phospho-(1D-myo-inositol) + CoA. The catalysed reaction is a 1-acyl-sn-glycero-3-phospho-L-serine + an acyl-CoA = a 1,2-diacyl-sn-glycero-3-phospho-L-serine + CoA. It catalyses the reaction a 1-acyl-sn-glycero-3-phosphoethanolamine + an acyl-CoA = a 1,2-diacyl-sn-glycero-3-phosphoethanolamine + CoA. It carries out the reaction 1-(9Z-octadecenoyl)-sn-glycero-3-phosphoethanolamine + (9Z)-octadecenoyl-CoA = 1,2-di-(9Z-octadecenoyl)-sn-glycero-3-phosphoethanolamine + CoA. The enzyme catalyses 1-(9Z-octadecenoyl)-sn-glycero-3-phosphoethanolamine + (9Z)-hexadecenoyl-CoA = 1-(9Z)-octadecenoyl-2-(9Z)-hexadecenoyl-sn-glycero-3-phosphoethanolamine + CoA. The catalysed reaction is 1-(9Z-octadecenoyl)-sn-glycero-3-phosphoethanolamine + hexadecanoyl-CoA = 1-(9Z-octadecenoyl)-2-hexadecanoyl-sn-glycero-3-phosphoethanolamine + CoA. It catalyses the reaction 1-(9Z-octadecenoyl)-sn-glycero-3-phosphoethanolamine + tetradecanoyl-CoA = 1-(9Z)-octadecenoyl-2-tetradecanoyl-sn-glycero-3-phosphoethanolamine + CoA. It carries out the reaction 1-(9Z-octadecenoyl)-sn-glycero-3-phosphate + (9Z)-octadecenoyl-CoA = 1,2-di-(9Z-octadecenoyl)-sn-glycero-3-phosphate + CoA. The enzyme catalyses (9Z)-hexadecenoyl-CoA + 1-hexadecanoyl-sn-glycero-3-phosphocholine = 1-hexadecanoyl-2-(9Z-hexadecenoyl)-sn-glycero-3-phosphocholine + CoA. The catalysed reaction is 1-hexadecanoyl-sn-glycero-3-phosphocholine + (9Z)-octadecenoyl-CoA = 1-hexadecanoyl-2-(9Z-octadecenoyl)-sn-glycero-3-phosphocholine + CoA. It catalyses the reaction 1-tetradecanoyl-sn-glycero-3-phosphoethanolamine + (9Z)-octadecenoyl-CoA = 1-tetradecanoyl-2-(9Z-octadecenoyl)-sn-glycero-3-phosphoethanolamine + CoA. It carries out the reaction 1-(9Z-octadecenoyl)-sn-glycero-3-phospho-L-serine + (9Z)-octadecenoyl-CoA = 1,2-di-(9Z)-octadecenoyl-sn-glycero-3-phospho-L-serine + CoA. The enzyme catalyses a 1-acyl-sn-glycero-3-phospho-(1D-myo-inositol) + (9Z)-octadecenoyl-CoA = a 1-acyl-2-(9Z-octadecenoyl)-sn-glycero-3-phospho-(1D-myo-inositol) + CoA. It participates in lipid metabolism; phospholipid metabolism. Broad specificity membrane-bound O-acyltransferase that mediates the incorporation of unsaturated acyl chains into the sn-2 position of various lysophospholipids. Preferentially acylates lysophosphocholine (LPC), but also lysophosphoethanolamine (LPE), lysophosphatidylglycerol (LPG), lysophosphatidic acid (LPA), lysophosphoethanolamine (LPE), lysophosphoinositol (LPI), and lysophosphoserine (LPS). Prefers an acyl residue to an alkyl residue at the sn-1 position of lysophospholipid acceptors. Accepts acyl chains in acyl-CoA from C-2 to C-20, and shows strong preference for unsaturated acyl-CoAs with 16-20 carbons. Together with SLC1, plays a central role in phosphatidic acid (PA) biosynthesis. PA is the intermediate, from which all glycerophospholipids are synthesized. Can also introduce an acyl chain at the sn-1 position of the lysophosphatidylcholine analog 1-hydroxy-2-hexadecyl-sn-glycero-3-phosphocholine (HHPC). This is Lysophospholipid acyltransferase from Saccharomyces cerevisiae (strain ATCC 204508 / S288c) (Baker's yeast).